The primary structure comprises 438 residues: Aspartate--tRNA(Asp/Asn) ligase (438 aa).

An L-aspartate-binding site is contributed by Glu176. The interval 198–201 is aspartate; sequence QLYK. L-aspartate is bound at residue Arg220. ATP is bound by residues 220–222, 228–230, and Glu361; these read RAE and RHL. The Mg(2+) site is built by Glu361 and Ser364. Ser364 and Arg368 together coordinate L-aspartate. 409–412 is a binding site for ATP; sequence GADR.

It belongs to the class-II aminoacyl-tRNA synthetase family. Type 2 subfamily. Homodimer. Mg(2+) serves as cofactor.

The protein localises to the cytoplasm. It catalyses the reaction tRNA(Asx) + L-aspartate + ATP = L-aspartyl-tRNA(Asx) + AMP + diphosphate. In terms of biological role, aspartyl-tRNA synthetase with relaxed tRNA specificity since it is able to aspartylate not only its cognate tRNA(Asp) but also tRNA(Asn). Reaction proceeds in two steps: L-aspartate is first activated by ATP to form Asp-AMP and then transferred to the acceptor end of tRNA(Asp/Asn). The polypeptide is Aspartate--tRNA(Asp/Asn) ligase (Methanococcus vannielii (strain ATCC 35089 / DSM 1224 / JCM 13029 / OCM 148 / SB)).